The following is a 530-amino-acid chain: MVDDKEKNMKCLTFFLMLPETVKNRSKKGSKKANSSGGGGGGGSVGSGSSKLPPVCYEIITLKTKKKKKMAADIFPRKKPANSSSTTVQQQHQHNLCNNNLIPAPNWQGLYPTIRERNAVMFNNDLMADVHFVVGPPGGTQRLPGHKYVLAVGSSVFHAMFYGELAEDKDEIRIPDVEPAAFLAMLKYIYCDEIDLAADTVLATLYAAKKYIVPHLARACVNFLETSLSAKNACVLLSQSCLFEEPDLTQRCWEVIDAQAELALKSEGFCDIDFQTLESILRRETLNAKEIVVFEAALNWAEVECQRQDLALSIENKRKVLGKALYLIRIPTMALDDFANGAAQSGVLTLNETNDIFLWYTASKKPELQFVSKARKGLVPQRCHRFQSCAYRSNQWRYRGRCDSIQFAVDKRVFIAGFGLYGSSCGSAEYSAKIELKRQGVVLGQNLSKYFSDGSSNTFPVWFEYPVQIEPDTFYTASVVLDGNELSYFGQEGMTEVQCGKVTVQFQCSSDSTNGTGVQGGQIPELIFYA.

The interval 23–48 is disordered; the sequence is KNRSKKGSKKANSSGGGGGGGSVGSG. Gly residues predominate over residues 36-46; sequence SGGGGGGGSVG. Residues 128–198 form the BTB domain; sequence ADVHFVVGPP…IYCDEIDLAA (71 aa). A BACK domain is found at 243–308; it reads FEEPDLTQRC…NWAEVECQRQ (66 aa).

In terms of tissue distribution, in the somatosensory cortex, specifically expressed in spiny stellate neurons during barrel formation. Also expressed in the olfactory bulb, piriform cortex and hippocampus.

The protein localises to the cytoplasm. It localises to the cytosol. Its subcellular location is the nucleus. Its function is as follows. Acts as a key regulator of dendritic field orientation during development of sensory cortex. Also directs dendrites toward active axon terminals when ectopically expressed. This chain is BTB/POZ domain-containing protein 3 (Btbd3), found in Mus musculus (Mouse).